The following is a 496-amino-acid chain: Matrilin-1 (496 aa).

Residues 1–22 form the signal peptide; it reads MRVLSGTSLMLCSLLLLLQALC. The VWFA 1 domain maps to 23–222; it reads SPGLAPQSRG…SRKFQEAFCV (200 aa). The N-linked (GlcNAc...) asparagine glycan is linked to Asn76. The 41-residue stretch at 223 to 263 folds into the EGF-like domain; it reads VSDLCATGDHDCEQVCISSPGSYTCACHEGFTLNSDGKTCN. Disulfide bonds link Cys227-Cys238, Cys234-Cys247, and Cys249-Cys262. The 190-residue stretch at 264 to 453 folds into the VWFA 2 domain; sequence VCSGGGGSSA…GKKLQKKICV (190 aa). N-linked (GalNAc...) asparagine glycosylation occurs at Asn344. The stretch at 467-495 forms a coiled coil; that stretch reads QAKVEGLLQALTRKLEAVSKRLAILENTV.

In terms of assembly, homotrimer. Part of a complex composed of MATN1 (via VWFA1 domain), type 2 collagens and type 6 collagens. Forms a complex (via covalent bonds) with ACAN; the interaction increases in abundance with increasing age of the organism via an increase in occupancy of MATN1 binding sites. Interacts with COMP. Post-translationally, N-glycosylated; reduces binding affinity for type 2 collagens.

Its subcellular location is the secreted. The protein localises to the extracellular space. It localises to the extracellular matrix. Functionally, a major component of the extracellular matrix of non-articular cartilage. Binds to type 2 collagens and forms long concatenated protein networks as part of the extracellular matrix. Required for the network-like organization and bundling of collagen fibrils surrounding chondrocytes in the zones of maturation and hypertrophy. Required for mechanotransduction and adaption to mechanical loading in cartilage chondrocytes, resulting in an increase in expression of the extracellular matrix components ACAN and COL2A1. Acts as a moderator of angiogenesis in response to injury. In Homo sapiens (Human), this protein is Matrilin-1.